We begin with the raw amino-acid sequence, 203 residues long: ATP-dependent Clp protease proteolytic subunit 2 (203 aa).

The Nucleophile role is filled by Ser-100. Residue His-125 is part of the active site.

The protein belongs to the peptidase S14 family. In terms of assembly, fourteen ClpP subunits assemble into 2 heptameric rings which stack back to back to give a disk-like structure with a central cavity, resembling the structure of eukaryotic proteasomes.

The protein localises to the cytoplasm. The enzyme catalyses Hydrolysis of proteins to small peptides in the presence of ATP and magnesium. alpha-casein is the usual test substrate. In the absence of ATP, only oligopeptides shorter than five residues are hydrolyzed (such as succinyl-Leu-Tyr-|-NHMec, and Leu-Tyr-Leu-|-Tyr-Trp, in which cleavage of the -Tyr-|-Leu- and -Tyr-|-Trp bonds also occurs).. Functionally, cleaves peptides in various proteins in a process that requires ATP hydrolysis. Has a chymotrypsin-like activity. Plays a major role in the degradation of misfolded proteins. The protein is ATP-dependent Clp protease proteolytic subunit 2 of Nocardia farcinica (strain IFM 10152).